The sequence spans 660 residues: Pentatricopeptide repeat-containing protein At1g03560, mitochondrial (660 aa).

The N-terminal 12 residues, 1 to 12, are a transit peptide targeting the mitochondrion; it reads MRRFYRKPFSVP. PPR repeat units follow at residues 151-185, 186-220, 221-255, 256-290, 291-325, 326-360, 361-395, 396-430, 431-465, 466-496, 502-536, 537-571, 574-605, and 606-640; these read NLECYVSLVDVLALAKDVDRIRFVSSEIKKFEFPM, TVSAANALIKSFGKLGMVEELLWVWRKMKENGIEP, TLYTYNFLMNGLVSAMFVDSAERVFEVMESGRIKP, DIVTYNTMIKGYCKAGQTQKAMEKLRDMETRGHEA, DKITYMTMIQACYADSDFGSCVALYQEMDEKGIQV, PPHAFSLVIGGLCKEGKLNEGYTVFENMIRKGSKP, NVAIYTVLIDGYAKSGSVEDAIRLLHRMIDEGFKP, DVVTYSVVVNGLCKNGRVEEALDYFHTCRFDGLAI, NSMFYSSLIDGLGKAGRVDEAERLFEEMSEKGCTR, DSYCYNALIDAFTKHRKVDEAIALFKRMEEE, TVYTYTILLSGMFKEHRNEEALKLWDMMIDKGITP, TAACFRALSTGLCLSGKVARACKILDELAPMGVIL, ACEDMINTLCKAGRIKEACKLADGITERGREV, and PGRIRTVMINALRKVGKADLAMKLMHSKIGIGYER.

It belongs to the PPR family. P subfamily.

It localises to the mitochondrion. This is Pentatricopeptide repeat-containing protein At1g03560, mitochondrial from Arabidopsis thaliana (Mouse-ear cress).